The chain runs to 1096 residues: Mediator of replication checkpoint protein 1 (1096 aa).

Residues 68-85 (EGKKAPEQNHNNGKDRSE) show a composition bias toward basic and acidic residues. The disordered stretch occupies residues 68-90 (EGKKAPEQNHNNGKDRSENSLPT). Phosphoserine is present on S144. Disordered stretches follow at residues 166 to 200 (ALKTPLTTGRPGATQRIDSSGATSQTQPIKSIEPQ), 294 to 316 (IQSELASEDSKREKARNVEYKKP), and 336 to 365 (DDSSSNEDDDIKLENAHPKPVQNDDELHEN). Positions 181 to 200 (RIDSSGATSQTQPIKSIEPQ) are enriched in polar residues. Positions 294–315 (IQSELASEDSKREKARNVEYKK) are enriched in basic and acidic residues. Residues 336-346 (DDSSSNEDDDI) are compositionally biased toward acidic residues. Phosphoserine occurs at positions 409, 411, and 434. Residues 488 to 542 (QKEVIETKGLKLEDMAKEKEIVENLLEQEILRNKRIRQKEKRREKLEENDFQLNA) are a coiled coil. Residues 527 to 620 (EKRREKLEEN…VEAKPKEKAD (94 aa)) are disordered. Residues 547–560 (SDSGSESSGFALSG) show a composition bias toward low complexity. Over residues 591–600 (KQKKSHHVKH) the composition is skewed to basic residues. Residues S605 and S607 each carry the phosphoserine modification. A Phosphothreonine modification is found at T609. Residues 611-620 (VEAKPKEKAD) show a composition bias toward basic and acidic residues. Residues 652–716 (DTQNIEEVMA…IKELKKRGVT (65 aa)) adopt a coiled-coil conformation. The segment at 724-743 (EESEDEWHGIGGADGEGSDD) is disordered. Residues S801 and S807 each carry the phosphoserine modification. Over residues 881-898 (DTQDNSINVGDNTGNNEQ) the composition is skewed to polar residues. The interval 881–903 (DTQDNSINVGDNTGNNEQKPVDQ) is disordered. S911 carries the post-translational modification Phosphoserine. Residues 1058-1096 (RKTEGSHRYHHDHHNKKMKMKTKTKSNKLFESGQDSFDN) form a disordered region. The segment covering 1065–1083 (RYHHDHHNKKMKMKTKTKS) has biased composition (basic residues).

Interacts with CDC45 in S phase. In terms of processing, phosphorylated by MEC1 and RAD53.

The protein localises to the nucleus. In terms of biological role, required for normal DNA replication. Phosphorylated in response to DNA replication stress. Phosphorylation allows it to mediate the activation of RAD53. The sequence is that of Mediator of replication checkpoint protein 1 (MRC1) from Saccharomyces cerevisiae (strain ATCC 204508 / S288c) (Baker's yeast).